The chain runs to 249 residues: tRNA (guanine-N(1)-)-methyltransferase (249 aa).

S-adenosyl-L-methionine-binding positions include glycine 121 and 141–146 (LGDFVL).

Belongs to the RNA methyltransferase TrmD family. In terms of assembly, homodimer.

The protein localises to the cytoplasm. The enzyme catalyses guanosine(37) in tRNA + S-adenosyl-L-methionine = N(1)-methylguanosine(37) in tRNA + S-adenosyl-L-homocysteine + H(+). Its function is as follows. Specifically methylates guanosine-37 in various tRNAs. This is tRNA (guanine-N(1)-)-methyltransferase from Cereibacter sphaeroides (strain KD131 / KCTC 12085) (Rhodobacter sphaeroides).